Consider the following 92-residue polypeptide: Small ribosomal subunit protein uS19 (92 aa).

Belongs to the universal ribosomal protein uS19 family.

Functionally, protein S19 forms a complex with S13 that binds strongly to the 16S ribosomal RNA. The chain is Small ribosomal subunit protein uS19 from Thermobifida fusca (strain YX).